A 129-amino-acid polypeptide reads, in one-letter code: KVFERCELARTLKELGLDGYKGVSLANWLCLTKWESSYNTKATNYNPGSESTDYGIFQINSKWWCDDGKTPNAVDGCHVACSELMENNIDKAVTCAKQIVREQGITAWVAWKSHCRGHDVSSYVEGCTL.

A C-type lysozyme domain is found at 1-129 (KVFERCELAR…VSSYVEGCTL (129 aa)). 4 disulfide bridges follow: cysteine 6-cysteine 127, cysteine 30-cysteine 115, cysteine 65-cysteine 81, and cysteine 77-cysteine 95. Catalysis depends on residues glutamate 35 and aspartate 53.

The protein belongs to the glycosyl hydrolase 22 family. In terms of assembly, monomer.

It catalyses the reaction Hydrolysis of (1-&gt;4)-beta-linkages between N-acetylmuramic acid and N-acetyl-D-glucosamine residues in a peptidoglycan and between N-acetyl-D-glucosamine residues in chitodextrins.. In terms of biological role, lysozymes have primarily a bacteriolytic function; those in tissues and body fluids are associated with the monocyte-macrophage system and enhance the activity of immunoagents. This is Lysozyme C-1/C-2 from Axis axis (Axis deer).